Consider the following 259-residue polypeptide: Cobalt-precorrin-4 C(11)-methyltransferase (259 aa).

The protein belongs to the precorrin methyltransferase family.

The catalysed reaction is Co-precorrin-4 + S-adenosyl-L-methionine = Co-precorrin-5A + S-adenosyl-L-homocysteine + H(+). It functions in the pathway cofactor biosynthesis; adenosylcobalamin biosynthesis; cob(II)yrinate a,c-diamide from sirohydrochlorin (anaerobic route): step 4/10. Functionally, catalyzes the methylation of C-11 in cobalt-precorrin-4 to form cobalt-precorrin-5A. This Methanocaldococcus jannaschii (strain ATCC 43067 / DSM 2661 / JAL-1 / JCM 10045 / NBRC 100440) (Methanococcus jannaschii) protein is Cobalt-precorrin-4 C(11)-methyltransferase (cbiF).